The chain runs to 275 residues: MGPAGVAARPGRFFGVYLLYCLNPRYRGRVYVGFTVNTARRVQQHNGGRKKGGAWRTSGRGPWEMVLVVHGFPSSVAALRFEWAWQHPHASRRLAHVGPRLRGETAFAFHLRVLAHMLRAPPWARLPLTLRWVRPDLRQDLCLPPPPHVPLAFGPPPPQAPAPRRRAGPFDDAEPEPDQGDPGACCSLCAQTIQDEEGPLCCPHPGCLLRAHVICLAEEFLQEEPGQLLPLEGQCPCCEKSLLWGDLIWLCQMDTEKEVEDSELEEAHWTDLLET.

Residues 12–95 enclose the GIY-YIG domain; the sequence is RFFGVYLLYC…QHPHASRRLA (84 aa). The segment covering 148-161 has biased composition (pro residues); that stretch reads HVPLAFGPPPPQAP. Residues 148–179 form a disordered region; sequence HVPLAFGPPPPQAPAPRRRAGPFDDAEPEPDQ. The segment at 186–238 adopts an SLX1-type zinc-finger fold; it reads CSLCAQTIQDEEGPLCCPHPGCLLRAHVICLAEEFLQEEPGQLLPLEGQCPCC.

Belongs to the SLX1 family. As to quaternary structure, forms a heterodimer with SLX4. It depends on a divalent metal cation as a cofactor.

The protein localises to the nucleus. Functionally, catalytic subunit of the SLX1-SLX4 structure-specific endonuclease that resolves DNA secondary structures generated during DNA repair and recombination. Has endonuclease activity towards branched DNA substrates, introducing single-strand cuts in duplex DNA close to junctions with ss-DNA. Has a preference for 5'-flap structures, and promotes symmetrical cleavage of static and migrating Holliday junctions (HJs). Resolves HJs by generating two pairs of ligatable, nicked duplex products. The sequence is that of Structure-specific endonuclease subunit SLX1 from Homo sapiens (Human).